The following is a 433-amino-acid chain: Enolase (433 aa).

Position 167 (Q167) interacts with (2R)-2-phosphoglycerate. Catalysis depends on E209, which acts as the Proton donor. Mg(2+) is bound by residues D246, E291, and D318. (2R)-2-phosphoglycerate is bound by residues K343, R372, S373, and K394. The active-site Proton acceptor is the K343.

Belongs to the enolase family. Component of the RNA degradosome, a multiprotein complex involved in RNA processing and mRNA degradation. The cofactor is Mg(2+).

The protein localises to the cytoplasm. Its subcellular location is the secreted. It localises to the cell surface. The catalysed reaction is (2R)-2-phosphoglycerate = phosphoenolpyruvate + H2O. It functions in the pathway carbohydrate degradation; glycolysis; pyruvate from D-glyceraldehyde 3-phosphate: step 4/5. Its function is as follows. Catalyzes the reversible conversion of 2-phosphoglycerate (2-PG) into phosphoenolpyruvate (PEP). It is essential for the degradation of carbohydrates via glycolysis. The sequence is that of Enolase from Vibrio vulnificus (strain CMCP6).